The chain runs to 427 residues: MGSVRTNRYSIVSSEEDGMKLATMAVANGFGNGKSKVHTRQQCRSRFVKKDGHCNVQFINVGEKGQRYLADIFTTCVDIRWRWMLVIFCLAFVLSWLFFGCVFWLIALLHGDLDASKESKACVSEVNSFTAAFLFSIETQTTIGYGFRCVTDECPIAVFMVVFQSIVGCIIDAFIIGAVMAKMAKPKKRNETLVFSHNAVIAMRDGKLCLMWRVGNLRKSHLVEAHVRAQLLKSRITSEGEYIPLDQIDINVGFDSGIDRIFLVSPITIVHEIDEDSPLYDLSKQDIDNADFEIVVILEGMVEATAMTTQCRSSYLANEILWGHRYEPVLFEEKHYYKVDYSRFHKTYEVPNTPLCSARDLAEKKYILSNANSFCYENEVALTSKEEDDSENGVPESTSTDTPPDIDLHNQASVPLEPRPLRRESEI.

Over 1-81 the chain is Cytoplasmic; sequence MGSVRTNRYS…IFTTCVDIRW (81 aa). An S-nitrosocysteine modification is found at Cys76. The helical transmembrane segment at 82 to 106 threads the bilayer; the sequence is RWMLVIFCLAFVLSWLFFGCVFWLI. At 107-128 the chain is on the extracellular side; the sequence is ALLHGDLDASKESKACVSEVNS. The segment at residues 129–140 is an intramembrane region (helical; Pore-forming); the sequence is FTAAFLFSIETQ. Positions 141 to 147 form an intramembrane region, pore-forming; the sequence is TTIGYGF. The short motif at 142–147 is the Selectivity filter element; the sequence is TIGYGF. Residues 148 to 156 are Extracellular-facing; sequence RCVTDECPI. Residues 157-178 traverse the membrane as a helical segment; the sequence is AVFMVVFQSIVGCIIDAFIIGA. Residues 179–427 lie on the Cytoplasmic side of the membrane; that stretch reads VMAKMAKPKK…PRPLRRESEI (249 aa). The segment at 181 to 208 is polyphosphoinositide (PIP2)-binding; that stretch reads AKMAKPKKRNETLVFSHNAVIAMRDGKL. Residues 384–427 form a disordered region; sequence SKEEDDSENGVPESTSTDTPPDIDLHNQASVPLEPRPLRRESEI. The PDZ-binding motif lies at 425–427; it reads SEI.

The protein belongs to the inward rectifier-type potassium channel (TC 1.A.2.1) family. KCNJ2 subfamily. As to quaternary structure, homotetramer. Homomultimeric and heteromultimeric association with KCNJ4/Kir2.3. Can form heteromeric channels with Kir2.6/KCNJ18. Associates, via its PDZ-recognition domain, with a complex containing LIN7A, LIN7B, LIN7C, DLG1, CASK and APBA1. S-nitrosylation increases the open probability and inward rectifying currents.

It is found in the cell membrane. It localises to the sarcolemma. The protein resides in the T-tubule. The enzyme catalyses K(+)(in) = K(+)(out). Activated by phosphatidylinositol 4,5 biphosphate (PtdIns(4,5)P2). Functionally, inward rectifier potassium channels are characterized by a greater tendency to allow potassium to flow into the cell rather than out of it. Their voltage dependence is regulated by the concentration of extracellular potassium; as external potassium is raised, the voltage range of the channel opening shifts to more positive voltages. The inward rectification is mainly due to the blockage of outward current by internal magnesium. Blocked by external barium or cesium. Probably participates in establishing action potential waveform and excitability of neuronal and muscle tissues. The polypeptide is Inward rectifier potassium channel 2 (KCNJ2) (Cavia porcellus (Guinea pig)).